We begin with the raw amino-acid sequence, 328 residues long: MSIYLRWSLEHGKSNSNSNGIINQQDERFNIFKDNLRFIDLHNENNKNATYKLGLTIFANLTNDEYRSLYLGARTEPVRRITKAKNVNMKYSAAVNVDEVPVTVDWRQKGAVNAIKDQGTCGSCWAFSTAAAVEGINKIVTGELVSLSEQELVDCDKSYNQGCNGGLMDYAFQFIMKNGGLNTEKDYPYHGTNGKCNSLLKNSRVVTIDGYEDVPSKDETALKRAVSYQPVSVAIDAGGRAFQHYQSGIFTGKCGTNMDHAVVAVGYGSENGVDYWIVRNSWGTRWGEDGYIRMERNVASKSGKCGIAIEASYPVKYSPNPVRGTSSV.

Positions M1–E99 are cleaved as a propeptide — activation peptide. Residues N48 and N60 are each glycosylated (N-linked (GlcNAc...) asparagine). Disulfide bonds link C121-C163, C155-C196, and C254-C305. Residue C124 is part of the active site. Active-site residues include H260 and N280.

Belongs to the peptidase C1 family. In terms of tissue distribution, present in both cotyledons and axes.

May function in an early event in cortical cell differentiation. This Brassica napus (Rape) protein is Cysteine proteinase COT44.